The primary structure comprises 3122 residues: Laminin subunit alpha-2 (3122 aa).

An N-terminal signal peptide occupies residues 1 to 22 (MPGAAGVLLLLLLSGGLGGVQA). Positions 35–286 (QQRGLFPAVL…SVKDISVGGM (252 aa)) constitute a Laminin N-terminal domain. N-linked (GlcNAc...) asparagine glycosylation is found at N55 and N89. Cystine bridges form between C287/C296, C289/C307, C309/C318, C321/C341, C344/C353, and C346/C378. 4 Laminin EGF-like domains span residues 287–343 (CICY…ECEA), 344–413 (CNCH…PCQP), 414–468 (CHCD…DCKA), and 469–517 (CNCS…GCDE). N-linked (GlcNAc...) asparagine glycosylation occurs at N303. Residues N363 and N380 are each glycosylated (N-linked (GlcNAc...) asparagine). 10 disulfide bridges follow: C381–C390, C393–C411, C414–C426, C416–C442, C444–C453, C456–C466, C469–C482, C471–C486, C488–C497, and C500–C515. N470 carries N-linked (GlcNAc...) asparagine glycosylation. The 10-residue stretch at 518–527 (CFCSGVSNRC) folds into the Laminin EGF-like 5; first part domain. A Laminin IV type A 1 domain is found at 531–723 (YWTYGKIQDM…DGSIAAAVEV (193 aa)). A Laminin EGF-like 5; second part domain is found at 724–756 (CQCPPGYTGSSCESCWPRHRRVNGTIFGGICEP). A glycan (N-linked (GlcNAc...) asparagine) is linked at N746. 32 disulfide bridges follow: C757–C766, C759–C773, C776–C785, C788–C804, C807–C822, C809–C832, C835–C844, C847–C862, C865–C879, C867–C886, C889–C898, C901–C915, C918–C930, C920–C937, C939–C948, C951–C964, C967–C979, C969–C985, C987–C996, C999–C1011, C1014–C1023, C1016–C1030, C1032–C1041, C1044–C1057, C1060–C1072, C1062–C1079, C1081–C1090, C1093–C1103, C1106–C1118, C1108–C1134, C1136–C1145, and C1148–C1163. 8 consecutive Laminin EGF-like domains span residues 757–806 (CQCF…DCQP), 807–864 (CACP…SCQP), 865–917 (CQCN…NCQP), 918–966 (CRCN…GCVP), 967–1013 (CNCN…GCTA), 1014–1059 (CECS…GCKA), 1060–1105 (CNCS…RCNL), and 1106–1165 (CDCF…GCSS). An N-linked (GlcNAc...) asparagine glycan is attached at N1061. A Laminin EGF-like 14; first part domain is found at 1166–1175 (CYCFGTTTQC). Residues 1176 to 1379 (SEAKGLIRTW…MTPPADLIEK (204 aa)) enclose the Laminin IV type A 2 domain. Positions 1380 to 1419 (CDCPLGYSGLSCEACLPGFYRLRSQPGGRTPGPTLGTCVP) constitute a Laminin EGF-like 14; second part domain. Cystine bridges form between C1420/C1429, C1422/C1436, C1439/C1448, C1451/C1466, C1469/C1484, C1471/C1494, C1497/C1506, C1509/C1524, C1527/C1539, C1529/C1546, C1548/C1557, and C1560/C1571. Laminin EGF-like domains lie at 1420–1468 (CQCN…DCQQ), 1469–1526 (CACP…SCQE), and 1527–1573 (CECD…ECVF). Residues 1574–2144 (CGDECTGLLL…NQARKQANSI (571 aa)) are domain II and I. N1597, N1614, N1700, N1810, N1901, N1916, N1920, N2017, N2028, N2045, N2126, and N2240 each carry an N-linked (GlcNAc...) asparagine glycan. Residues 1630 to 2150 (ERLIQLAEGN…ANSIKVSVSS (521 aa)) adopt a coiled-coil conformation. Laminin G-like domains are found at residues 2145–2328 (KVSV…CKGC), 2340–2521 (TIQF…TKGC), 2526–2710 (VYTV…IGRC), 2763–2934 (SKQF…VGTC), and 2939–3110 (QRGT…KALE). Residues C2302 and C2328 are joined by a disulfide bond. 3 N-linked (GlcNAc...) asparagine glycosylation sites follow: N2360, N2435, and N2478. C2495 and C2521 are oxidised to a cystine. N2551, N2558, and N2648 each carry an N-linked (GlcNAc...) asparagine glycan. The cysteines at positions 2683 and 2710 are disulfide-linked. N-linked (GlcNAc...) asparagine glycosylation is found at N2868 and N2893. A disulfide bridge connects residues C2909 and C2934. The segment covering 3043-3060 (GNQVEAQSPNPASTSADT) has biased composition (polar residues). The interval 3043–3063 (GNQVEAQSPNPASTSADTNDP) is disordered.

In terms of assembly, laminin is a complex glycoprotein, consisting of three different polypeptide chains (alpha, beta, gamma), which are bound to each other by disulfide bonds into a cross-shaped molecule comprising one long and three short arms with globules at each end. Alpha-2 is a subunit of laminin-2 (laminin-211 or merosin), laminin-4 (laminin-221 or S-merosin) and laminin-12 (laminin-213). Interacts with FBLN1, FBLN2 and NID2. As to expression, placenta, striated muscle, peripheral nerve, cardiac muscle, pancreas, lung, spleen, kidney, adrenal gland, skin, testis, meninges, choroid plexus, and some other regions of the brain; not in liver, thymus and bone.

The protein resides in the secreted. The protein localises to the extracellular space. It is found in the extracellular matrix. Its subcellular location is the basement membrane. Functionally, binding to cells via a high affinity receptor, laminin is thought to mediate the attachment, migration and organization of cells into tissues during embryonic development by interacting with other extracellular matrix components. The protein is Laminin subunit alpha-2 (LAMA2) of Homo sapiens (Human).